The sequence spans 305 residues: 4-diphosphocytidyl-2-C-methyl-D-erythritol kinase (305 aa).

Lys-15 is an active-site residue. Residue 99–109 (PMGGGIGGGSS) participates in ATP binding. Asp-141 is an active-site residue.

The protein belongs to the GHMP kinase family. IspE subfamily.

The catalysed reaction is 4-CDP-2-C-methyl-D-erythritol + ATP = 4-CDP-2-C-methyl-D-erythritol 2-phosphate + ADP + H(+). It functions in the pathway isoprenoid biosynthesis; isopentenyl diphosphate biosynthesis via DXP pathway; isopentenyl diphosphate from 1-deoxy-D-xylulose 5-phosphate: step 3/6. Catalyzes the phosphorylation of the position 2 hydroxy group of 4-diphosphocytidyl-2C-methyl-D-erythritol. This Marinomonas sp. (strain MWYL1) protein is 4-diphosphocytidyl-2-C-methyl-D-erythritol kinase.